The primary structure comprises 151 residues: MIDGVKVKKLMKHSDDRGFFAELVRDDENLLEHFGQASWSKSYPGVIKAFHYHEKQDDLWFFPTGHAQVVLYDLREDSKTKGETDVYYMGEDNPMLLLIPKGVAHGYRVLGETPLTIIYFTTMSYNPDQPDEKRIPWDDETIGFNWNTEFR.

The protein to dTDP-4-dehydrorhamnose reductase.

The protein operates within spore coat biogenesis; spore coat polysaccharide biosynthesis. This chain is Spore coat polysaccharide biosynthesis protein SpsL (spsL), found in Bacillus subtilis (strain 168).